A 215-amino-acid polypeptide reads, in one-letter code: Thymidylate kinase (215 aa).

11–18 (GIDGAGKS) is a binding site for ATP.

Belongs to the thymidylate kinase family.

The enzyme catalyses dTMP + ATP = dTDP + ADP. Its function is as follows. Phosphorylation of dTMP to form dTDP in both de novo and salvage pathways of dTTP synthesis. In Nitrosomonas europaea (strain ATCC 19718 / CIP 103999 / KCTC 2705 / NBRC 14298), this protein is Thymidylate kinase.